Reading from the N-terminus, the 150-residue chain is Transcriptional regulator MraZ (150 aa).

SpoVT-AbrB domains are found at residues 8–55 (FINN…GISH) and 84–127 (AVQL…QPQN).

Belongs to the MraZ family. Forms oligomers.

The protein localises to the cytoplasm. Its subcellular location is the nucleoid. The protein is Transcriptional regulator MraZ of Rickettsia bellii (strain OSU 85-389).